The sequence spans 857 residues: Catalase-peroxidase (857 aa).

Residues 207 to 330 constitute a cross-link (tryptophyl-tyrosyl-methioninium (Trp-Tyr) (with M-356)); it reads WHSAGTYRVS…LAAVQMGLIY (124 aa). Catalysis depends on H208, which acts as the Proton acceptor. Positions 330–356 form a cross-link, tryptophyl-tyrosyl-methioninium (Tyr-Met) (with W-207); the sequence is YVNPEGPNGKPDPIAAAKDIRETFGRM. Position 371 (H371) interacts with heme b.

This sequence belongs to the peroxidase family. Peroxidase/catalase subfamily. As to quaternary structure, homodimer or homotetramer. Heme b serves as cofactor. In terms of processing, formation of the three residue Trp-Tyr-Met cross-link is important for the catalase, but not the peroxidase activity of the enzyme.

It catalyses the reaction H2O2 + AH2 = A + 2 H2O. The enzyme catalyses 2 H2O2 = O2 + 2 H2O. Its function is as follows. Bifunctional enzyme with both catalase and broad-spectrum peroxidase activity. The sequence is that of Catalase-peroxidase from Rhodopirellula baltica (strain DSM 10527 / NCIMB 13988 / SH1).